A 1056-amino-acid polypeptide reads, in one-letter code: Contactin-5 (1056 aa).

Positions 1 to 14 are enriched in low complexity; the sequence is MKADSSSSSSMSSR. Residues 1–33 are disordered; it reads MKADSSSSSSMSSRMRLRNSHGVGSSSQDWSPF. Polar residues predominate over residues 22-31; the sequence is GVGSSSQDWS. 6 consecutive Ig-like C2-type domains span residues 57–142, 154–240, 258–343, 348–432, 438–519, and 527–622; these read PVFI…IVLS, PFSG…RVLS, PKIE…GHLQ, PQWI…AELK, PMFN…AELT, and PMRV…AELL. Intrachain disulfides connect Cys81/Cys131, Cys175/Cys227, and Cys280/Cys327. Residues Asn96 and Asn119 are each glycosylated (N-linked (GlcNAc...) asparagine). N-linked (GlcNAc...) asparagine glycosylation is present at Asn355. 3 disulfide bridges follow: Cys369–Cys416, Cys459–Cys507, and Cys549–Cys606. Residues Asn489 and Asn496 are each glycosylated (N-linked (GlcNAc...) asparagine). Fibronectin type-III domains follow at residues 629 to 727, 732 to 829, 834 to 928, and 933 to 1023; these read PPGV…TKEA, APAN…SAEG, PPSE…TKKN, and PPGN…TSSG. The disordered stretch occupies residues 711 to 736; it reads GTGDPSPPSRAVRTKEAVPSVAPANV. N-linked (GlcNAc...) asparagine glycosylation is found at Asn772, Asn887, Asn945, and Asn958. Asn1035 carries GPI-anchor amidated asparagine lipidation. A propeptide spans 1036–1056 (removed in mature form); sequence SPPGLAWTALFLSLMVPSFPL.

The protein belongs to the immunoglobulin superfamily. Contactin family.

It is found in the cell membrane. Functionally, contactins mediate cell surface interactions during nervous system development. The chain is Contactin-5 (cntn5) from Danio rerio (Zebrafish).